A 302-amino-acid polypeptide reads, in one-letter code: Cell division protein FtsQ (302 aa).

A disordered region spans residues Met1 to Ala41. At Met1–Thr50 the chain is on the cytoplasmic side. Residues Glu18–Lys38 are compositionally biased toward low complexity. A helical membrane pass occupies residues Val51–Gly71. Over His72 to Ala302 the chain is Periplasmic. A POTRA domain is found at Phe94–Arg162.

This sequence belongs to the FtsQ/DivIB family. FtsQ subfamily.

The protein resides in the cell inner membrane. In terms of biological role, essential cell division protein. This is Cell division protein FtsQ from Caulobacter vibrioides (strain ATCC 19089 / CIP 103742 / CB 15) (Caulobacter crescentus).